The sequence spans 1133 residues: MWSLLLLAALVGQGFALKNVFDMRIQLPHSVNFGETSVSGYTEFPPLSLQEAEQLVPESSCNMDNHQSLSTINKLTKVIWRKKANQESANQNSFEVVESEVSFKGLCMLKHRMVEESYRNRRSVICYDLACNSTFCKPTVYMIVPIHACNMMKSCLIGLGPYRIQVVYERTYCTTGILTEGKCFVPDKAVVSALKRGMYAIASIETICFFIHQKGNTYKIVTAITSAMGSKCNNTDTKVQGYYICIIGGNSAPVYAPAGEDFRAMEVFSGIITSPHGEDHDLPGEEIATYQISGQIEAKIPHTVSSKNLKLTAFAGIPSYSSTSILAASEDGRFIFSPGLFPNLNQSVCDNNALPLIWRGLIDLTGYYEAVHPCNVFCVLSGPGASCEAFSEGGIFNITSPMCLVSKQNRFRAAEQQISFVCQRVDMDIIVYCNGQKKTILTKTLVIGQCIYTITSLFSLLPGVAHSIAIELCVPGFHGWATAALLITFCFGWVLIPACTLAILLVLKFFANILHTSNQENRFKAILRKIKEEFEKTKGSMVCEICKYECETLKELKAHNLSCVQGECPYCFTHCEPTETAIQAHYKVCQATHRFREDLKKTVTPQNIGPGCYRTLNLFRYKSRCYILTMWTLLLIIESILWAASAAEIPLVPLWTDNAHGVGSVPMHTDLELDFSLPSSSKYTYKRHLTNPVNDQQSVSLHIEIESQGIGAAVHHLGHWYDARLNLKTSFHCYGACTKYQYPWHTAKCHFEKDYEYENSWACNPPDCPGVGTGCTACGLYLDQLKPVGTAFKIISVRYSRKVCVQFGEEHLCKTIDMNDCFVTRHAKICIIGTVSKFSQGDTLLFLGPMEGGGIIFKHWCTSTCHFGDPGDVMGPKDKPFICPEFPGQFRKKCNFATTPVCEYDGNIISGYKKVLATIDSFQSFNTSNIHFTDERIEWRDPDGMLRDHINIVISKDIDFENLAENPCKVGLQAANIEGAWGSGVGFTLTCKVSLTECPTFLTSIKACDMAICYGAESVTLSRGQNTVKITGKGGHSGSSFKCCHGKECSSTGLQASAPHLDKVNGISELENEKVYDDGAPECGITCWFKKSGEWVMGIINGNWVVLIVLCVLLLFSLILLSILCPVRKHKKS.

The N-terminal stretch at 1–16 is a signal peptide; it reads MWSLLLLAALVGQGFA. Over 17 to 484 the chain is Lumenal; it reads LKNVFDMRIQ…PGFHGWATAA (468 aa). Cystine bridges form between Cys61-Cys155, Cys107-Cys126, Cys131-Cys136, Cys173-Cys183, Cys208-Cys245, Cys232-Cys349, Cys374-Cys433, Cys378-Cys387, Cys403-Cys422, and Cys450-Cys473. N-linked (GlcNAc...) asparagine; by host glycosylation occurs at Asn132. Residues Asn233 and Asn345 are each glycosylated (N-linked (GlcNAc...) asparagine; by host). The N-linked (GlcNAc...) asparagine; by host glycan is linked to Asn397. Residues 485 to 504 form a helical membrane-spanning segment; sequence LLITFCFGWVLIPACTLAIL. Topologically, residues 505–626 are cytoplasmic; the sequence is LVLKFFANIL…NLFRYKSRCY (122 aa). Residues 514 to 531 are binding to the ribonucleoprotein; sequence LHTSNQENRFKAILRKIK. 2 CCHC-type zinc fingers span residues 543 to 563 and 568 to 589; these read CEIC…NLSC and CPYC…YKVC. Binding to the ribonucleoprotein stretches follow at residues 586-603, 590-601, and 609-623; these read YKVC…KKTV, QATHRFREDLKK, and GPGC…RYKS. An ITAM domain is found at 609 to 632; that stretch reads GPGCYRTLNLFRYKSRCYILTMWT. The YxxL motif lies at 613–616; it reads YRTL. Residues 627-647 traverse the membrane as a helical segment; the sequence is ILTMWTLLLIIESILWAASAA. Over 648–1105 the chain is Lumenal; sequence EIPLVPLWTD…VMGIINGNWV (458 aa). Intrachain disulfides connect Cys733–Cys768, Cys737–Cys775, Cys749–Cys883, Cys763–Cys894, Cys778–Cys902, Cys804–Cys813, Cys821–Cys830, and Cys861–Cys865. The interval 755-775 is fusion loop; sequence YEYENSWACNPPDCPGVGTGC. Asn926 carries N-linked (GlcNAc...) asparagine; by host glycosylation. 5 disulfide bridges follow: Cys968–Cys998, Cys991–Cys1043, Cys1008–Cys1013, Cys1044–Cys1049, and Cys1083–Cys1087. A helical membrane pass occupies residues 1106-1125; sequence VLIVLCVLLLFSLILLSILC. Positions 1120 to 1133 are binding to the ribonucleoprotein; sequence LLSILCPVRKHKKS. Residues 1126-1133 are Cytoplasmic-facing; that stretch reads PVRKHKKS.

This sequence belongs to the hantavirus envelope glycoprotein family. In terms of assembly, homodimer. Homotetramer; forms heterotetrameric Gn-Gc spikes in the pre-fusion conformation. Interacts (via C-terminus) with the nucleoprotein. Interacts with host TUFM; this interaction contributes to the virus-induced degradation of mitochondria by autophagy, which leads to degradation of host MAVS and inhibition of type I interferon (IFN) responses. Interacts with host MAP1LC3B; this interaction contributes to the virus-induced degradation of mitochondria by autophagy, which leads to degradation of host MAVS and inhibition of type I interferon (IFN) responses. As to quaternary structure, homodimer. Homotetramer; forms heterotetrameric Gn-Gc spikes in the pre-fusion conformation. Homotrimer; forms homotrimer in the post-fusion conformation at acidic pH. Interacts (via C-terminus) with the nucleoprotein. Envelope polyprotein precursor is quickly cleaved in vivo just after synthesis, presumably by host signal peptidase.

The protein resides in the virion membrane. The protein localises to the host cell surface. Its subcellular location is the host Golgi apparatus membrane. It localises to the host endoplasmic reticulum membrane. It is found in the host mitochondrion. Forms homotetramers with glycoprotein C at the surface of the virion. Attaches the virion to host cell receptors including integrin ITGAV/ITGB3. This attachment induces virion internalization predominantly through clathrin-dependent endocytosis. Mediates the assembly and budding of infectious virus particles through its interaction with the nucleocapsid protein and the viral genome. May dysregulate normal immune and endothelial cell responses through an ITAM motif. Translocates to mitochondria, binds to host TUFM and recruits MAP1LC3B. These interactions induce mitochondrial autophagy and therefore destruction of host MAVS leading to inhibition of type I interferon (IFN) responses. Concomitant breakdown of glycoprotein N is apparently prevented by the nucleoprotein that may inhibit Gn-stimulated autophagosome-lysosome fusion. Interacts with the viral genomic RNA. In terms of biological role, forms homotetramers with glycoprotein N at the surface of the virion. Attaches the virion to host cell receptors including integrin ITGAV/ITGB3. This attachment induces virion internalization predominantly through clathrin-dependent endocytosis. Class II fusion protein that promotes fusion of viral membrane with host endosomal membrane after endocytosis of the virion. The polypeptide is Envelopment polyprotein (GP) (Homo sapiens (Human)).